The sequence spans 215 residues: 5'-deoxynucleotidase YGK1 (215 aa).

In terms of domain architecture, HD spans 58–164 (ISDHMYRMGL…VKDIDKYEML (107 aa)). Residues His61, His89, Asp90, Glu93, Asp98, Ile99, and Asp159 each contribute to the a divalent metal cation site.

The protein belongs to the HDDC2 family. Homodimer. Requires Mn(2+) as cofactor. It depends on Co(2+) as a cofactor. The cofactor is Mg(2+).

It carries out the reaction a 2'-deoxyribonucleoside 5'-phosphate + H2O = a 2'-deoxyribonucleoside + phosphate. Functionally, catalyzes the dephosphorylation of the nucleoside 5'-monophosphates deoxyadenosine monophosphate (dAMP), deoxycytidine monophosphate (dCMP), deoxyguanosine monophosphate (dGMP) and deoxythymidine monophosphate (dTMP). The polypeptide is 5'-deoxynucleotidase YGK1 (Saccharomyces cerevisiae (strain ATCC 204508 / S288c) (Baker's yeast)).